The chain runs to 137 residues: Putative FERT-1 protein (137 aa).

This is Putative FERT-1 protein (FERT-1) from Ascaris suum (Pig roundworm).